Reading from the N-terminus, the 480-residue chain is Cysteine--tRNA ligase (480 aa).

Position 29 (cysteine 29) interacts with Zn(2+). The 'HIGH' region motif lies at 31 to 41 (PTVYGHAHLGH). Residues cysteine 221, histidine 246, and glutamate 250 each contribute to the Zn(2+) site. The 'KMSKS' region motif lies at 278–282 (KMGKS). Position 281 (lysine 281) interacts with ATP.

Belongs to the class-I aminoacyl-tRNA synthetase family. In terms of assembly, monomer. Zn(2+) is required as a cofactor.

It is found in the cytoplasm. It catalyses the reaction tRNA(Cys) + L-cysteine + ATP = L-cysteinyl-tRNA(Cys) + AMP + diphosphate. The sequence is that of Cysteine--tRNA ligase from Chlorobium chlorochromatii (strain CaD3).